Consider the following 512-residue polypeptide: 2,3-bisphosphoglycerate-independent phosphoglycerate mutase (512 aa).

Mn(2+) contacts are provided by D14 and S64. S64 serves as the catalytic Phosphoserine intermediate. Substrate is bound by residues H125, 155 to 156, R187, R193, 259 to 262, and K332; these read RD and RADR. Mn(2+) is bound by residues D399, H403, D440, H441, and H459.

This sequence belongs to the BPG-independent phosphoglycerate mutase family. As to quaternary structure, monomer. Mn(2+) serves as cofactor.

It catalyses the reaction (2R)-2-phosphoglycerate = (2R)-3-phosphoglycerate. It participates in carbohydrate degradation; glycolysis; pyruvate from D-glyceraldehyde 3-phosphate: step 3/5. Functionally, catalyzes the interconversion of 2-phosphoglycerate and 3-phosphoglycerate. The sequence is that of 2,3-bisphosphoglycerate-independent phosphoglycerate mutase from Vesicomyosocius okutanii subsp. Calyptogena okutanii (strain HA).